Consider the following 205-residue polypeptide: Protein Rcp (205 aa).

This sequence belongs to the NAD(P)-dependent epimerase/dehydratase family.

The polypeptide is Protein Rcp (rcp) (Vibrio cholerae serotype O1 (strain ATCC 39315 / El Tor Inaba N16961)).